The primary structure comprises 262 residues: Protein NEGATIVE GRAVITROPIC RESPONSE OF ROOTS (262 aa).

Positions 1–40 are disordered; the sequence is MKFFNWMQNKLGGKQENRKSNTSTSTTYAKPEPREEFSDW. The IGT motif signature appears at 43-49; the sequence is SLLAIGT.

The protein belongs to the LAZY family.

Involved in the control of root gravitropism. This Medicago truncatula (Barrel medic) protein is Protein NEGATIVE GRAVITROPIC RESPONSE OF ROOTS.